A 136-amino-acid polypeptide reads, in one-letter code: DNA-directed RNA polymerase subunit omega (136 aa).

Residues 79–107 (EPEAETVPLLSSSPAAAAVAPQSSSDDAA) form a disordered region. Over residues 89–107 (SSSPAAAAVAPQSSSDDAA) the composition is skewed to low complexity.

The protein belongs to the RNA polymerase subunit omega family. In terms of assembly, the RNAP catalytic core consists of 2 alpha, 1 beta, 1 beta' and 1 omega subunit. When a sigma factor is associated with the core the holoenzyme is formed, which can initiate transcription.

The enzyme catalyses RNA(n) + a ribonucleoside 5'-triphosphate = RNA(n+1) + diphosphate. Promotes RNA polymerase assembly. Latches the N- and C-terminal regions of the beta' subunit thereby facilitating its interaction with the beta and alpha subunits. This chain is DNA-directed RNA polymerase subunit omega, found in Methylobacterium radiotolerans (strain ATCC 27329 / DSM 1819 / JCM 2831 / NBRC 15690 / NCIMB 10815 / 0-1).